The primary structure comprises 338 residues: RNA 3'-terminal phosphate cyclase (338 aa).

ATP contacts are provided by residues Q103 and 283 to 287 (YLADQ). Residue H308 is the Tele-AMP-histidine intermediate of the active site.

This sequence belongs to the RNA 3'-terminal cyclase family. Type 1 subfamily.

It is found in the cytoplasm. The catalysed reaction is a 3'-end 3'-phospho-ribonucleotide-RNA + ATP = a 3'-end 2',3'-cyclophospho-ribonucleotide-RNA + AMP + diphosphate. Its function is as follows. Catalyzes the conversion of 3'-phosphate to a 2',3'-cyclic phosphodiester at the end of RNA. The mechanism of action of the enzyme occurs in 3 steps: (A) adenylation of the enzyme by ATP; (B) transfer of adenylate to an RNA-N3'P to produce RNA-N3'PP5'A; (C) and attack of the adjacent 2'-hydroxyl on the 3'-phosphorus in the diester linkage to produce the cyclic end product. The biological role of this enzyme is unknown but it is likely to function in some aspects of cellular RNA processing. In Escherichia coli O45:K1 (strain S88 / ExPEC), this protein is RNA 3'-terminal phosphate cyclase.